The primary structure comprises 348 residues: 3-isopropylmalate dehydrogenase (348 aa).

76 to 87 provides a ligand contact to NAD(+); the sequence is GPKWTDPNNRPE. Substrate-binding residues include Arg-94, Arg-104, Arg-132, and Asp-217. Mg(2+) contacts are provided by Asp-217, Asp-241, and Asp-245. 275-287 contacts NAD(+); that stretch reads GSAPDIAGKNVAN.

The protein belongs to the isocitrate and isopropylmalate dehydrogenases family. LeuB type 1 subfamily. In terms of assembly, homodimer. Requires Mg(2+) as cofactor. It depends on Mn(2+) as a cofactor.

The protein resides in the cytoplasm. The enzyme catalyses (2R,3S)-3-isopropylmalate + NAD(+) = 4-methyl-2-oxopentanoate + CO2 + NADH. It participates in amino-acid biosynthesis; L-leucine biosynthesis; L-leucine from 3-methyl-2-oxobutanoate: step 3/4. Functionally, catalyzes the oxidation of 3-carboxy-2-hydroxy-4-methylpentanoate (3-isopropylmalate) to 3-carboxy-4-methyl-2-oxopentanoate. The product decarboxylates to 4-methyl-2 oxopentanoate. The polypeptide is 3-isopropylmalate dehydrogenase (Staphylococcus aureus (strain NCTC 8325 / PS 47)).